A 122-amino-acid chain; its full sequence is Large ribosomal subunit protein uL14 (122 aa).

This sequence belongs to the universal ribosomal protein uL14 family. As to quaternary structure, part of the 50S ribosomal subunit. Forms a cluster with proteins L3 and L19. In the 70S ribosome, L14 and L19 interact and together make contacts with the 16S rRNA in bridges B5 and B8.

Binds to 23S rRNA. Forms part of two intersubunit bridges in the 70S ribosome. The polypeptide is Large ribosomal subunit protein uL14 (Leifsonia xyli subsp. xyli (strain CTCB07)).